Reading from the N-terminus, the 147-residue chain is Large ribosomal subunit protein uL11 (147 aa).

It belongs to the universal ribosomal protein uL11 family. In terms of assembly, part of the ribosomal stalk of the 50S ribosomal subunit. Interacts with L10 and the large rRNA to form the base of the stalk. L10 forms an elongated spine to which L12 dimers bind in a sequential fashion forming a multimeric L10(L12)X complex. One or more lysine residues are methylated.

In terms of biological role, forms part of the ribosomal stalk which helps the ribosome interact with GTP-bound translation factors. The sequence is that of Large ribosomal subunit protein uL11 from Bacteroides thetaiotaomicron (strain ATCC 29148 / DSM 2079 / JCM 5827 / CCUG 10774 / NCTC 10582 / VPI-5482 / E50).